We begin with the raw amino-acid sequence, 263 residues long: Small ribosomal subunit protein uS2 (263 aa).

Over residues 223 to 249 the composition is skewed to basic and acidic residues; that stretch reads KALREQDGEALANEEKEITDEEKKEVL. A disordered region spans residues 223–263; it reads KALREQDGEALANEEKEITDEEKKEVLDEAMSEEDFGEEQE. Positions 250–263 are enriched in acidic residues; it reads DEAMSEEDFGEEQE.

This sequence belongs to the universal ribosomal protein uS2 family.

The chain is Small ribosomal subunit protein uS2 from Campylobacter jejuni subsp. jejuni serotype O:6 (strain 81116 / NCTC 11828).